The primary structure comprises 448 residues: UDP-N-acetylmuramoyl-L-alanine--L-glutamate ligase (448 aa).

Glycine 118–threonine 124 provides a ligand contact to ATP.

It belongs to the MurCDEF family. MurD2 subfamily.

It localises to the cytoplasm. The enzyme catalyses UDP-N-acetyl-alpha-D-muramoyl-L-alanine + L-glutamate + ATP = UDP-N-acetyl-alpha-D-muramoyl-L-alanyl-L-glutamate + ADP + phosphate + H(+). Its pathway is cell wall biogenesis; peptidoglycan biosynthesis. Functionally, cell wall formation. Catalyzes the addition of L-glutamate to the nucleotide precursor UDP-N-acetylmuramoyl-L-alanine. The sequence is that of UDP-N-acetylmuramoyl-L-alanine--L-glutamate ligase from Salinispora tropica (strain ATCC BAA-916 / DSM 44818 / JCM 13857 / NBRC 105044 / CNB-440).